The sequence spans 398 residues: 8-amino-7-oxononanoate synthase (398 aa).

R26 serves as a coordination point for substrate. 113-114 is a binding site for pyridoxal 5'-phosphate; the sequence is GF. H138 contributes to the substrate binding site. S181, H209, and T238 together coordinate pyridoxal 5'-phosphate. N6-(pyridoxal phosphate)lysine is present on K241. T355 provides a ligand contact to substrate.

This sequence belongs to the class-II pyridoxal-phosphate-dependent aminotransferase family. BioF subfamily. In terms of assembly, homodimer. Requires pyridoxal 5'-phosphate as cofactor.

The catalysed reaction is 6-carboxyhexanoyl-[ACP] + L-alanine + H(+) = (8S)-8-amino-7-oxononanoate + holo-[ACP] + CO2. Its pathway is cofactor biosynthesis; biotin biosynthesis. Its function is as follows. Catalyzes the decarboxylative condensation of pimeloyl-[acyl-carrier protein] and L-alanine to produce 8-amino-7-oxononanoate (AON), [acyl-carrier protein], and carbon dioxide. This Aeromonas salmonicida (strain A449) protein is 8-amino-7-oxononanoate synthase.